The primary structure comprises 977 residues: Fc receptor-like protein 5 (977 aa).

The first 15 residues, 1–15 (MLLWVILLVLAPVSG), serve as a signal peptide directing secretion. The Extracellular segment spans residues 16-851 (QFARTPRPII…ANRSGPFATG (836 aa)). Ig-like C2-type domains are found at residues 23–101 (PIIF…LDFS), 188–271 (PFTR…SVIS), 287–374 (PVLT…LSVT), 380–463 (PVLN…KAVS), 473–556 (PVLT…EVVS), 566–651 (PILT…ISLS), 659–744 (PILT…VTLK), and 752–834 (PVLT…ETVT). 3 cysteine pairs are disulfide-bonded: C44-C85, C211-C260, and C308-C355. N383 is a glycosylation site (N-linked (GlcNAc...) asparagine). Intrachain disulfides connect C401–C448, C494–C541, C587–C634, C680–C727, and C773–C819. The chain crosses the membrane as a helical span at residues 852–872 (VAGGLLSIAGLAAGALLLYCW). Residues 873-977 (LSRKAGRKPA…LFLASSAPHR (105 aa)) lie on the Cytoplasmic side of the membrane. Residues 879–898 (RKPASDPARSPSDSDSQEPT) are disordered. Residues 883–892 (SDPARSPSDS) are compositionally biased toward low complexity. Short sequence motifs (ITIM motif) lie at residues 897 to 902 (PTYHNV), 910 to 915 (PVYTNA), 922 to 927 (VVYSEV), and 952 to 957 (IIYSEV).

Interacts with CR2. Interacts with CD19. In terms of tissue distribution, expressed in marginal zone B-cells, immunoblasts, tonsillar germinal center centrocytes and in the intraepithelial and interfollicular regions of the tonsil. Expressed in many lymphoma cell lines and on hairy cell leukemia cells. Isoform 1, isoform 3, isoform 4 and isoform 5 are detected in lymph node, spleen, bone marrow, and small intestine with preponderance of isoform 3. Expressed in mature and memory B-cells and down-regulated in germinal center cells (at protein level).

The protein resides in the cell membrane. Plays an important role in B-cell response to antigen that acts both as a negative or positive coreceptor. Inhibits B-cell receptor (BCR) signaling in the absence of CR2 stimulation but engagement with CR2 and the BCR lead to a superior calcium response compared to CR2 and BCR costimulation. May be involved in B-cell development and differentiation in peripheral lymphoid organs and may be useful markers of B-cell stages. May have an immunoregulatory role in marginal zone B-cells. May play a role in fertilization. In Homo sapiens (Human), this protein is Fc receptor-like protein 5 (FCRL5).